Consider the following 162-residue polypeptide: Lectin BRA-3 (162 aa).

An N-terminal signal peptide occupies residues 1-24 (MQRSEIVQAVTLLVVVFAITTAEC). Residues 25 to 152 (TCPGNLDWQE…NKNKNFLCKM (128 aa)) enclose the C-type lectin domain. 3 disulfide bridges follow: Cys-26–Cys-39, Cys-56–Cys-150, and Cys-125–Cys-142.

As to quaternary structure, homotetramer; disulfide-linked. In terms of tissue distribution, coelemic fluid.

In terms of biological role, sugar-binding protein which recognizes specific carbohydrate structures and agglutinates a variety of animal cells by binding to cell-surface glycoproteins and glycolipids. Calcium-dependent lectin. Invertebrate lectins may be involved in defense functions. In Megabalanus rosa (Acorn barnacle), this protein is Lectin BRA-3.